A 126-amino-acid chain; its full sequence is CD59 glycoprotein (126 aa).

Residues 1–22 (MRARRGFILLLLLAVLCSTGVS) form the signal peptide. Residues 23–110 (LRCYNCLDPV…NGAISLLGKT (88 aa)) enclose the UPAR/Ly6 domain. Disulfide bonds link Cys25–Cys48, Cys28–Cys35, Cys41–Cys61, Cys67–Cys85, and Cys86–Cys91. An N-linked (GlcNAc...) asparagine glycan is attached at Asn38. Residue Asn101 is the site of GPI-anchor amidated asparagine attachment. A propeptide spans 102–126 (GAISLLGKTALLVTSVLAAILKPCF) (removed in mature form).

As to quaternary structure, interacts with T-cell surface antigen CD2. In terms of processing, N- and O-glycosylated.

The protein resides in the cell membrane. It is found in the secreted. Functionally, potent inhibitor of the complement membrane attack complex (MAC) action, which protects self-cells from damage during complement activation. Acts by binding to the beta-haipins of C8 (C8A and C8B) components of the assembling MAC, forming an intermolecular beta-sheet that prevents incorporation of the multiple copies of C9 required for complete formation of the osmolytic pore. The polypeptide is CD59 glycoprotein (Rattus norvegicus (Rat)).